The chain runs to 225 residues: Testis-expressed protein 30 (225 aa).

This Mus musculus (Mouse) protein is Testis-expressed protein 30 (Tex30).